Here is a 238-residue protein sequence, read N- to C-terminus: Thrombin-like enzyme collinein-1 (238 aa).

Residues V1 to A229 enclose the Peptidase S1 domain. 6 disulfide bridges follow: C7–C141, C28–C44, C78–C236, C120–C190, C152–C169, and C180–C205. Active-site charge relay system residues include H43 and D88. S184 serves as the catalytic Charge relay system.

This sequence belongs to the peptidase S1 family. Snake venom subfamily. Monomer. In terms of tissue distribution, expressed by the venom gland.

The protein localises to the secreted. Inhibited by Cu(2+) and, to a lesser extent, by Zn(2+) and Ba(2+). Not inhibited by Ca(2+) and Mg(2+). Thrombin-like snake venom serine protease. Releases fibrinopeptide A and B in the conversion of fibrinogen to fibrin, with preferential activity on the alpha chain of fibrinogen. Also hydrolyzes N-p-toluensulfonyl arginine ester (TAME) and chromogenic artificial substrates of the blood coagulation cascade: S-2222 for factor Xa, S-2302 for kallikrein and S-2238 for thrombin. When tested in vitro, the recombinant protein does not degrade blood clots, suggesting that this toxin lacks fibrinolytic activity. In addition, it moderately inhibits human Kv10.1/KCNH1/EAG1 currents, with a mechanism independent of its enzymatic activity. It selectively blocks Kv10.1/KCNH1/EAG1 in a time and dose-dependent manner (IC(50)=4.2 uM for native protein and IC(50)=2.5 uM for recombinant protein). It may have a preference in interacting with Kv10.1/KCNH1/EAG1 in its closed state, since the inhibitory effect of the toxin is decreased at more depolarized potentials. Corroboratively, it may have possible antitumor applications, since it reduces the viability of human breast cancer cell line MCF-7, which strongly expresses Kv10.1/KCNH1/EAG1, but does not affect the liver carcinoma and the non-tumorigenic epithelial breast cell lines, which weakly express Kv10.1/KCNH1/EAG1. When tested on peripheral blood mononuclear cells (PBMC), the native protein shows mild cytotoxicity, whereas the recombinant protein does not show any cytotoxicity. Native form is not immununogenic, since it does not induce statistically significant antibody production in mice, whereas recombinant form shows an antibody titer slightly higher than the native form. In vivo, subplantar injection in mice paw induces a discreet paw edema. In addition, intraperitoneal injection of the recombinant protein into mice led to fibrinogen depletion, resulting in the blood incoagulability. The polypeptide is Thrombin-like enzyme collinein-1 (Crotalus durissus collilineatus (Brazilian rattlesnake)).